A 360-amino-acid chain; its full sequence is Flavone O-methyltransferase 1 (360 aa).

Met-127 to Leu-133 contributes to the substrate binding site. A substrate binding region spans residues Ala-159 to Met-177. The S-adenosyl-L-methionine site is built by Gly-205, Asp-228, Asp-248, Met-249, and Lys-262. His-266 serves as the catalytic Proton acceptor.

It belongs to the class I-like SAM-binding methyltransferase superfamily. Cation-independent O-methyltransferase family. COMT subfamily. As to quaternary structure, homodimer.

Functionally, flavone-specific O-methyltransferase with a preference for flavones &gt; flavonols. Active with tricetin, luteolin, quercitin and eriodictyol. Very low activity with phenylpropanoids (5-hydroxyferulic acid and caffeic acid). Catalyzes the sequential O-methylation of tricetin via 3'-O-methyltricetin, 3',5'-O-methyltricetin to 3',4',5'-O-trimethyltricetin. The protein is Flavone O-methyltransferase 1 (OMT1) of Triticum aestivum (Wheat).